The sequence spans 382 residues: Chaperone protein DnaJ (382 aa).

The region spanning 6 to 70 is the J domain; that stretch reads DYYEILGLPK…EKRAQYDRFG (65 aa). A CR-type zinc finger spans residues 131–213; it reads GVRKDIDIPR…CGGAGRVRNK (83 aa). Residues Cys-144, Cys-147, Cys-161, Cys-164, Cys-187, Cys-190, Cys-201, and Cys-204 each coordinate Zn(2+). CXXCXGXG motif repeat units follow at residues 144-151, 161-168, 187-194, and 201-208; these read CSTCSGTG, CPTCGGTG, CSTCHGRG, and CPVCGGAG. The disordered stretch occupies residues 146–168; the sequence is TCSGTGAKPGTSPKRCPTCGGTG. Residues 348–382 form a disordered region; it reads FENLSKGKKPQEEEKSKAEKHKKGIFEKVKDAFES. A compositionally biased stretch (basic and acidic residues) spans 371–382; sequence GIFEKVKDAFES.

The protein belongs to the DnaJ family. Homodimer. Requires Zn(2+) as cofactor.

It localises to the cytoplasm. In terms of biological role, participates actively in the response to hyperosmotic and heat shock by preventing the aggregation of stress-denatured proteins and by disaggregating proteins, also in an autonomous, DnaK-independent fashion. Unfolded proteins bind initially to DnaJ; upon interaction with the DnaJ-bound protein, DnaK hydrolyzes its bound ATP, resulting in the formation of a stable complex. GrpE releases ADP from DnaK; ATP binding to DnaK triggers the release of the substrate protein, thus completing the reaction cycle. Several rounds of ATP-dependent interactions between DnaJ, DnaK and GrpE are required for fully efficient folding. Also involved, together with DnaK and GrpE, in the DNA replication of plasmids through activation of initiation proteins. This chain is Chaperone protein DnaJ, found in Methanosarcina acetivorans (strain ATCC 35395 / DSM 2834 / JCM 12185 / C2A).